Consider the following 879-residue polypeptide: JmjC domain-containing histone demethylation protein 1 (879 aa).

Disordered stretches follow at residues 1 to 45, 117 to 212, and 407 to 449; these read MSEQ…EEGK, STSP…PKRK, and KDVK…EGLK. A PHD-type zinc finger spans residues 23-116; the sequence is PEPCPLCRET…KWYCAPCLAR (94 aa). Composition is skewed to basic and acidic residues over residues 183 to 192 and 407 to 433; these read IDMKSEREQQ and KDVK…HLTE. A JmjC domain is found at 416–598; the sequence is NDSRESSEIR…TQLRLRQIEI (183 aa). T472 lines the substrate pocket. Positions 475 and 477 each coordinate Fe cation. K492 contributes to the substrate binding site. H566 is a binding site for Fe cation. Residues 763 to 879 are disordered; it reads HPPAWSENRQ…KVEEDMDIDH (117 aa). The span at 769 to 782 shows a compositional bias: polar residues; the sequence is ENRQSPQIETTTVQ. Low complexity predominate over residues 786-818; the sequence is PSTSSSDAISGSGPGASPGASANGGANENEQAE. Over residues 848-864 the composition is skewed to basic and acidic residues; it reads FVEKKTVWGPKLDKEKI.

The protein belongs to the JHDM1 histone demethylase family. Fe(2+) serves as cofactor.

It localises to the nucleus. The catalysed reaction is N(6),N(6)-dimethyl-L-lysyl(36)-[histone H3] + 2 2-oxoglutarate + 2 O2 = L-lysyl(36)-[histone H3] + 2 formaldehyde + 2 succinate + 2 CO2. In terms of biological role, histone demethylase that specifically demethylates 'Lys-36' of histone H3, thereby playing a central role in histone code. The sequence is that of JmjC domain-containing histone demethylation protein 1 (JHD1) from Cryptococcus neoformans var. neoformans serotype D (strain B-3501A) (Filobasidiella neoformans).